Reading from the N-terminus, the 520-residue chain is MVDQDWIKALVNIPISHAVGVVAASTVIYFLSSCFYNLYLHPLRKIPGPKLAAIGPYLEFYHEVIRDGQYLWEIAKMHDKYGPIVRVNDKEVHIRDPSYYSTIYTAGARKTNKDPATVGAFDVPTATAATVDHDHHRARRGYLNPYFSKRSITNLEPFIHERVTKLLSRFQEHLDNDQVLSLDGAFCALTADVITSRFYGKHYNYLDLPDFHFVVRDGFLGLTKVYHLARFIPVLVTVLKRLPYSCLRLIAPSVSDLLQMRNEIHERGGDEFLSSKTSEAKSSILFGALADTHIPPVERTVERMLDEGTVILFAGTETTSRTLAITFFYLLTHPECLRKLREELNSLPKVEGDRFPLATLENLPYLNGVVHEGFRLAFGPISRSGRVATQENLKYKEHVIPAGTPVSQSTYFMHTDPKIFPEPEKFKPERWIEAAEKKIPLKKYITNFSQGSRQCIGYTMAFAEMYLAMSRIARAYDVELYDTTKADIDMTHARIVAYPKAIPGKTEHVGEIRVKVLKAL.

The chain crosses the membrane as a helical span at residues Leu-10–Phe-30. The N-linked (GlcNAc...) asparagine glycan is linked to Asn-447. Cys-455 is a heme binding site.

Belongs to the cytochrome P450 family. Requires heme as cofactor.

Its subcellular location is the membrane. It participates in sesquiterpene biosynthesis; trichothecene biosynthesis. Functionally, cytochrome P450 monooxygenase; part of the core gene cluster that mediates the biosynthesis of trichothecenes, a very large family of chemically related bicyclic sesquiterpene compounds acting as mycotoxins, including T2-toxin. The biosynthesis of trichothecenes begins with the cyclization of farnesyl diphosphate to trichodiene and is catalyzed by the trichodiene synthase TRI5. Trichodiene undergoes a series of oxygenations catalyzed by the cytochrome P450 monooxygenase TRI4. TRI4 controls the addition of four oxygens at C-2, C-3, C-11, and the C-12, C-13-epoxide to form the intermediate isotrichotriol. Isotrichotriol then undergoes a non-enzymatic isomerization and cyclization to form isotrichodermol. During this process, the oxygen at the C-2 position becomes the pyran ring oxygen and the hydroxyl group at C-11 is lost. More complex type A trichothecenes are built by modifying isotrichodermol through a series of paired hydroxylation and acetylation or acylation steps. Isotrichodermol is converted to isotrichodermin by the acetyltransferase TRI101. TRI101 encodes a C-3 transacetylase that acts as a self-protection or resistance factor during biosynthesis and that the presence of a free C-3 hydroxyl group is a key component of Fusarium trichothecene phytotoxicity. A second hydroxyl group is added to C-15 by the trichothecene C-15 hydroxylase TRI11, producing 15-decalonectrin, which is then acetylated by TRI3, producing calonectrin. A third hydroxyl group is added at C-4 by the cytochrome P450 monooxygenase TRI13, converting calonectrin to 3,15-diacetoxyspirpenol, which is subsequently acetylated by the acetyltransferase TRI7. A fourth hydroxyl group is added to C-8 by the cytochrome P450 monooxygenase TRI1, followed by the addition of an isovaleryl moiety by TRI16. Finally, the acetyl group is removed from the C-3 position by the trichothecene C-3 esterase TRI8 to produce T-2 toxin. The chain is Cytochrome P450 monooxygenase TRI4 from Fusarium sporotrichioides.